We begin with the raw amino-acid sequence, 475 residues long: Aspartyl/glutamyl-tRNA(Asn/Gln) amidotransferase subunit B (475 aa).

The protein belongs to the GatB/GatE family. GatB subfamily. In terms of assembly, heterotrimer of A, B and C subunits.

The enzyme catalyses L-glutamyl-tRNA(Gln) + L-glutamine + ATP + H2O = L-glutaminyl-tRNA(Gln) + L-glutamate + ADP + phosphate + H(+). It carries out the reaction L-aspartyl-tRNA(Asn) + L-glutamine + ATP + H2O = L-asparaginyl-tRNA(Asn) + L-glutamate + ADP + phosphate + 2 H(+). Allows the formation of correctly charged Asn-tRNA(Asn) or Gln-tRNA(Gln) through the transamidation of misacylated Asp-tRNA(Asn) or Glu-tRNA(Gln) in organisms which lack either or both of asparaginyl-tRNA or glutaminyl-tRNA synthetases. The reaction takes place in the presence of glutamine and ATP through an activated phospho-Asp-tRNA(Asn) or phospho-Glu-tRNA(Gln). In Chlorobium phaeobacteroides (strain BS1), this protein is Aspartyl/glutamyl-tRNA(Asn/Gln) amidotransferase subunit B.